We begin with the raw amino-acid sequence, 956 residues long: Zinc finger CCHC domain-containing protein 14 (956 aa).

Disordered regions lie at residues 25–50, 78–99, 206–229, 243–276, 361–464, 485–505, 543–583, and 750–786; these read SSLNSGGGGGGGGGGGGKSAPGPSGA, ALHTSAHSTEESLPKRPLGKHG, SSSSPSQQLQSPSPGNPSLPKVGA, GIPSSQSSAQHHLQHSASTSASLPHCSHTGGTGS, KEKS…EKEK, PVQNETGSSPAAHHPLPPQLM, LEER…QGLS, and FYSGGAGSSSPGNIPASSQSHHHHHHHQQPPAPPQPA. The segment covering 29–43 has biased composition (gly residues); the sequence is SGGGGGGGGGGGGKS. 2 stretches are compositionally biased toward low complexity: residues 206 to 225 and 246 to 265; these read SSSSPSQQLQSPSPGNPSLP and SSQSSAQHHLQHSASTSASL. Over residues 369–389 the composition is skewed to polar residues; it reads LNSSAPSLVTSSGVARVTPTS. Over residues 423–432 the composition is skewed to low complexity; that stretch reads SSEYSSSSSS. The segment covering 438 to 464 has biased composition (basic and acidic residues); that stretch reads VREESSDSAEESDRRVDIHVEGTEKEK. A compositionally biased stretch (low complexity) spans 750–768; sequence FYSGGAGSSSPGNIPASSQ. The CCHC-type zinc-finger motif lies at 913 to 930; the sequence is LSCYNCGATGHRAQDCKQ.

The chain is Zinc finger CCHC domain-containing protein 14 (Zcchc14) from Mus musculus (Mouse).